The primary structure comprises 359 residues: NADH-quinone oxidoreductase subunit H (359 aa).

8 helical membrane passes run 16 to 36, 94 to 114, 129 to 149, 167 to 187, 208 to 228, 261 to 281, 296 to 316, and 331 to 351; these read IWPA…CVLL, GLFV…WAVI, LLFL…AGWA, VSYE…SASL, FLSW…ISGL, FFLA…ILFL, IPGW…FLWV, and LGWK…GAWM.

This sequence belongs to the complex I subunit 1 family. NDH-1 is composed of 14 different subunits. Subunits NuoA, H, J, K, L, M, N constitute the membrane sector of the complex.

It localises to the cell inner membrane. The catalysed reaction is a quinone + NADH + 5 H(+)(in) = a quinol + NAD(+) + 4 H(+)(out). Functionally, NDH-1 shuttles electrons from NADH, via FMN and iron-sulfur (Fe-S) centers, to quinones in the respiratory chain. The immediate electron acceptor for the enzyme in this species is believed to be ubiquinone. Couples the redox reaction to proton translocation (for every two electrons transferred, four hydrogen ions are translocated across the cytoplasmic membrane), and thus conserves the redox energy in a proton gradient. This subunit may bind ubiquinone. The sequence is that of NADH-quinone oxidoreductase subunit H from Polaromonas sp. (strain JS666 / ATCC BAA-500).